The sequence spans 338 residues: Fructose-1,6-bisphosphatase class 1 (338 aa).

Positions 90, 112, 114, and 115 each coordinate Mg(2+). Residues 115-118 (DGSS), Asn-207, and Lys-273 contribute to the substrate site. Position 279 (Glu-279) interacts with Mg(2+).

Belongs to the FBPase class 1 family. In terms of assembly, homotetramer. Requires Mg(2+) as cofactor.

It is found in the cytoplasm. It catalyses the reaction beta-D-fructose 1,6-bisphosphate + H2O = beta-D-fructose 6-phosphate + phosphate. The protein operates within carbohydrate biosynthesis; gluconeogenesis. This Xanthomonas campestris pv. campestris (strain 8004) protein is Fructose-1,6-bisphosphatase class 1.